The primary structure comprises 517 residues: Membrane-bound lytic murein transglycosylase F (517 aa).

Positions 1–32 are cleaved as a signal peptide; sequence MKKFKINYLLIGIVTLLLAAALWPSIPWFGKA. A non-LT domain region spans residues 33–269; that stretch reads ENRIAAIQSR…RLEEKYLGHG (237 aa). Residues 270 to 517 are LT domain; it reads GDFDYVDTRS…PNTLVQAPRR (248 aa). Glu314 is an active-site residue.

It in the N-terminal section; belongs to the bacterial solute-binding protein 3 family. The protein in the C-terminal section; belongs to the transglycosylase Slt family.

Its subcellular location is the cell outer membrane. It carries out the reaction Exolytic cleavage of the (1-&gt;4)-beta-glycosidic linkage between N-acetylmuramic acid (MurNAc) and N-acetylglucosamine (GlcNAc) residues in peptidoglycan, from either the reducing or the non-reducing ends of the peptidoglycan chains, with concomitant formation of a 1,6-anhydrobond in the MurNAc residue.. Functionally, murein-degrading enzyme that degrades murein glycan strands and insoluble, high-molecular weight murein sacculi, with the concomitant formation of a 1,6-anhydromuramoyl product. Lytic transglycosylases (LTs) play an integral role in the metabolism of the peptidoglycan (PG) sacculus. Their lytic action creates space within the PG sacculus to allow for its expansion as well as for the insertion of various structures such as secretion systems and flagella. This Enterobacter sp. (strain 638) protein is Membrane-bound lytic murein transglycosylase F.